A 427-amino-acid polypeptide reads, in one-letter code: Serine--tRNA ligase (427 aa).

Position 233–235 (233–235) interacts with L-serine; it reads TAE. An ATP-binding site is contributed by 264–266; sequence RSE. Glu-287 is a binding site for L-serine. 351-354 lines the ATP pocket; that stretch reads EISS. Position 387 (Ser-387) interacts with L-serine.

It belongs to the class-II aminoacyl-tRNA synthetase family. Type-1 seryl-tRNA synthetase subfamily. Homodimer. The tRNA molecule binds across the dimer.

The protein localises to the cytoplasm. The catalysed reaction is tRNA(Ser) + L-serine + ATP = L-seryl-tRNA(Ser) + AMP + diphosphate + H(+). It catalyses the reaction tRNA(Sec) + L-serine + ATP = L-seryl-tRNA(Sec) + AMP + diphosphate + H(+). The protein operates within aminoacyl-tRNA biosynthesis; selenocysteinyl-tRNA(Sec) biosynthesis; L-seryl-tRNA(Sec) from L-serine and tRNA(Sec): step 1/1. Functionally, catalyzes the attachment of serine to tRNA(Ser). Is also able to aminoacylate tRNA(Sec) with serine, to form the misacylated tRNA L-seryl-tRNA(Sec), which will be further converted into selenocysteinyl-tRNA(Sec). The sequence is that of Serine--tRNA ligase from Buchnera aphidicola subsp. Schizaphis graminum (strain Sg).